A 459-amino-acid polypeptide reads, in one-letter code: LRSDFLLGPERYNKLIRPAVNKSQQVTIGIKVSLAQLISVNEREQIMTTNVWLTQEWTDYRLVWDPNEYEGIKKLRIPSQHIWLPDIVLYNNADGVYEVSFYCNAVVSNTGDIFWLPPAIYKSACAIEVRNFPFDQQNCTLKFRSWTYDRTELDLVLTSDFASRDDYTPSGEWDIVSLPGRKNEDPNDLTYLDITYDFVIKRKPLFYTINLIIPCVLITSLAILVFYLPSDCGEKVTLCMSVLLALTVFLLLISKIVPPTSLAVPLIGKYLMFTMVLVTFSIVTSVCVLNVHHRSPSTHYMPEWVKCVFLHKLPAFLLMRRPGRSNVRERFRRKHQRKSFSSHQDGDSFFLTDDPGRVCGAWRVGDLPEGSEFRQRVKVRHDQDVDEAIDGVRFIAEHMKIEDDDEGIIEDWKYVAMVIDRLFLWIFILVCVVGTLGLFVQPLFQSYNTPVAEEVYGDF.

The Extracellular segment spans residues 1-203 (LRSDFLLGPE…ITYDFVIKRK (203 aa)). Residues asparagine 21 and asparagine 138 are each glycosylated (N-linked (GlcNAc...) asparagine). A disulfide bridge links cysteine 125 with cysteine 139. A helical transmembrane segment spans residues 204–228 (PLFYTINLIIPCVLITSLAILVFYL). Topologically, residues 229 to 235 (PSDCGEK) are cytoplasmic. A helical transmembrane segment spans residues 236-254 (VTLCMSVLLALTVFLLLIS). Over 255–269 (KIVPPTSLAVPLIGK) the chain is Extracellular. The helical transmembrane segment at 270 to 291 (YLMFTMVLVTFSIVTSVCVLNV) threads the bilayer. Over 292-421 (HHRSPSTHYM…WKYVAMVIDR (130 aa)) the chain is Cytoplasmic. The chain crosses the membrane as a helical span at residues 422 to 440 (LFLWIFILVCVVGTLGLFV).

This sequence belongs to the ligand-gated ion channel (TC 1.A.9) family. Acetylcholine receptor (TC 1.A.9.1) subfamily. Beta-2/CHRNB2 sub-subfamily. Neuronal AChR is a heteropentamer composed of two different types of subunits: alpha and beta. CHRNB2/Beta-2 subunit can be combined to CHRNA2/alpha-2, CHRNA3/alpha-3 or CHRNA4/alpha-4, CHRNA5/alpha-5, CHRNA6/alpha-6 and CHRNB3/beta-3 to give rise to functional receptors.

The protein localises to the synaptic cell membrane. It localises to the cell membrane. It carries out the reaction Ca(2+)(in) = Ca(2+)(out). It catalyses the reaction K(+)(in) = K(+)(out). The enzyme catalyses Na(+)(in) = Na(+)(out). Activated by a myriad of ligands such as acetylcholine, cytisine, nicotine, choline and epibatidine. nAChR activity is inhibited by the antagonist alpha-conotoxins BuIA, PnIA, PnIC, GID and MII, small disulfide-constrained peptides from cone snails. Its function is as follows. Component of neuronal acetylcholine receptors (nAChRs) that function as pentameric, ligand-gated cation channels with high calcium permeability among other activities. nAChRs are excitatory neurotrasnmitter receptors formed by a collection of nAChR subunits known to mediate synaptic transmission in the nervous system and the neuromuscular junction. Each nAchR subunit confers differential attributes to channel properties, including activation, deactivation and desensitization kinetics, pH sensitivity, cation permeability, and binding to allosteric modulators. CHRNB2 forms heteropentameric neuronal acetylcholine receptors with CHRNA2, CHRNA3, CHRNA4 and CHRNA6, as well as CHRNA5 and CHRNB3 as accesory subunits. In Carassius auratus (Goldfish), this protein is Neuronal acetylcholine receptor subunit beta-2 (chrnb2).